The sequence spans 313 residues: MIETEMTPRPPAIFIMGPTASGKTALAIALRERLPVELISVDSALIYRGMDIGTAKPSAEELAQAPHRLIDIRDPAEAYSAADFRADALKEMAAITAAGRIPLLVGGTMLYFKALLEGLSPLPPADPAVRERIEQQAAEQGWDVLHRQLQEIDPVAALRIHPNDPQRLSRALEVFFISGKTLTELTKISGESLPYHVHQFAIAPTSRELIHQRIELRYHQMLAAGFETEARALFARGDLHTDLPSIRCVGYRQMWSYLSGEISYDEMVYRGICATRQLAKRQMTWLRGWDSVHWLDSEKPGEALDSVIQVVSA.

An ATP-binding site is contributed by 17-24 (GPTASGKT). 19–24 (TASGKT) serves as a coordination point for substrate. Interaction with substrate tRNA stretches follow at residues 42 to 45 (DSAL), 166 to 170 (QRLSR), and 247 to 252 (RCVGYR).

The protein belongs to the IPP transferase family. In terms of assembly, monomer. It depends on Mg(2+) as a cofactor.

The enzyme catalyses adenosine(37) in tRNA + dimethylallyl diphosphate = N(6)-dimethylallyladenosine(37) in tRNA + diphosphate. Catalyzes the transfer of a dimethylallyl group onto the adenine at position 37 in tRNAs that read codons beginning with uridine, leading to the formation of N6-(dimethylallyl)adenosine (i(6)A). The sequence is that of tRNA dimethylallyltransferase from Serratia proteamaculans (strain 568).